A 166-amino-acid chain; its full sequence is Small ribosomal subunit protein uS5 (166 aa).

The 64-residue stretch at 11–74 (LQEKLIAVNR…EQAKRNLSKV (64 aa)) folds into the S5 DRBM domain.

The protein belongs to the universal ribosomal protein uS5 family. Part of the 30S ribosomal subunit. Contacts proteins S4 and S8.

With S4 and S12 plays an important role in translational accuracy. Its function is as follows. Located at the back of the 30S subunit body where it stabilizes the conformation of the head with respect to the body. The protein is Small ribosomal subunit protein uS5 of Aeromonas salmonicida (strain A449).